The sequence spans 158 residues: Non-secretory ribonuclease (158 aa).

Positions 1–27 (MVPKLFTSQICLLLLLGLSSLEVSLHA) are cleaved as a signal peptide. A C-linked (Man) tryptophan glycan is attached at Trp-34. Catalysis depends on His-42, which acts as the Proton acceptor. The residue at position 60 (Tyr-60) is a 3'-nitrotyrosine. A substrate-binding site is contributed by 65–69 (KNRNT). 3 N-linked (GlcNAc...) asparagine glycosylation sites follow: Asn-86, Asn-92, and Asn-111. His-153 acts as the Proton donor in catalysis.

The protein belongs to the pancreatic ribonuclease family. In terms of assembly, interacts with and forms a tight 1:1 complex with RNH1. Dimerization of two such complexes may occur.

The protein localises to the lysosome. The protein resides in the cytoplasmic granule. It carries out the reaction an [RNA] containing cytidine + H2O = an [RNA]-3'-cytidine-3'-phosphate + a 5'-hydroxy-ribonucleotide-3'-[RNA].. The catalysed reaction is an [RNA] containing uridine + H2O = an [RNA]-3'-uridine-3'-phosphate + a 5'-hydroxy-ribonucleotide-3'-[RNA].. This is a non-secretory ribonuclease. It is a pyrimidine specific nuclease with a slight preference for U. Cytotoxin and helminthotoxin. Possesses a wide variety of biological activities. The chain is Non-secretory ribonuclease (RNASE2) from Saguinus labiatus (Red-chested mustached tamarin).